The sequence spans 531 residues: Bifunctional aspartate aminotransferase and L-aspartate beta-decarboxylase (531 aa).

Residues G114 and N255 each coordinate L-aspartate. At K314 the chain carries N6-(pyridoxal phosphate)lysine. Residue R496 participates in L-aspartate binding.

It belongs to the class-I pyridoxal-phosphate-dependent aminotransferase family. Homododecamer. Requires pyridoxal 5'-phosphate as cofactor.

The enzyme catalyses L-aspartate + H(+) = L-alanine + CO2. It carries out the reaction L-aspartate + 2-oxoglutarate = oxaloacetate + L-glutamate. With respect to regulation, inhibited by 10 mM Co(2+), Mn(2+) and Ni(2+), and by 1 mM Cu(2+) and Hg(2+). Its function is as follows. Bifunctional enzyme that has both L-aspartate decarboxylase and transaminase activity. Has high activity with L-aspartate, and much lower activity with D-aspartate, L-lysine and L-glutamine. The sequence is that of Bifunctional aspartate aminotransferase and L-aspartate beta-decarboxylase from Pseudomonas sp.